The primary structure comprises 149 residues: SsrA-binding protein (149 aa).

This sequence belongs to the SmpB family.

It is found in the cytoplasm. Required for rescue of stalled ribosomes mediated by trans-translation. Binds to transfer-messenger RNA (tmRNA), required for stable association of tmRNA with ribosomes. tmRNA and SmpB together mimic tRNA shape, replacing the anticodon stem-loop with SmpB. tmRNA is encoded by the ssrA gene; the 2 termini fold to resemble tRNA(Ala) and it encodes a 'tag peptide', a short internal open reading frame. During trans-translation Ala-aminoacylated tmRNA acts like a tRNA, entering the A-site of stalled ribosomes, displacing the stalled mRNA. The ribosome then switches to translate the ORF on the tmRNA; the nascent peptide is terminated with the 'tag peptide' encoded by the tmRNA and targeted for degradation. The ribosome is freed to recommence translation, which seems to be the essential function of trans-translation. This is SsrA-binding protein from Anaplasma marginale (strain Florida).